Consider the following 128-residue polypeptide: Large ribosomal subunit protein uL18 (128 aa).

It belongs to the universal ribosomal protein uL18 family. As to quaternary structure, part of the 50S ribosomal subunit; part of the 5S rRNA/L5/L18/L25 subcomplex. Contacts the 5S and 23S rRNAs.

Functionally, this is one of the proteins that bind and probably mediate the attachment of the 5S RNA into the large ribosomal subunit, where it forms part of the central protuberance. The polypeptide is Large ribosomal subunit protein uL18 (Acidothermus cellulolyticus (strain ATCC 43068 / DSM 8971 / 11B)).